A 357-amino-acid chain; its full sequence is Cytosolic Fe-S cluster assembly factor NAR1 (357 aa).

8 residues coordinate [4Fe-4S] cluster: Cys14, Cys28, Cys31, Cys34, Cys129, Cys172, Cys297, and Cys301.

The protein belongs to the NARF family.

In terms of biological role, component of the cytosolic Fe/S protein assembly machinery. May play a role in the transfer of pre-assembled Fe/S clusters to target apoproteins. The sequence is that of Cytosolic Fe-S cluster assembly factor NAR1 (NAR1) from Encephalitozoon cuniculi (strain GB-M1) (Microsporidian parasite).